A 126-amino-acid chain; its full sequence is UPF0102 protein gll3754 (126 aa).

The protein belongs to the UPF0102 family.

The polypeptide is UPF0102 protein gll3754 (Gloeobacter violaceus (strain ATCC 29082 / PCC 7421)).